The primary structure comprises 380 residues: MRILADENIPVVDAFFADQGSIRRLPGRAIDRAALAEVDVLLVRSVTEVSRAALAGSPVRFVGTCTIGTDHLDLDYFAEAGIAWSSAPGCNARGVVDYVLGCLLAMAEVRGADLAERTYGVVGAGQVGGRLVEVLRGLGWKVLVCDPPRQAREPDGEFVSLERLLAEADVISLHTPLNRDGEHPTRHLLDEPRLAALRPGTWLVNASRGAVVDNQALRRLLEGGADLEVALDVWEGEPQADPELAARCLIATPHIAGYSLEGKLRGTAQIYQAYCAWRGIAERVSLQDVLPETWLAGLQLNPGCDPAWALATLCRAVYDPRSDDAAFRRSLTGDSATRRAAFDALRKHYPPRREITGLRVATGGQAELQRVVRALGAQLV.

Substrate contacts are provided by S45 and T66. A disulfide bridge connects residues C65 and C90. NAD(+)-binding positions include 126-127, D146, T175, 206-208, and D232; these read QV and ASR. R208 is a catalytic residue. The active site involves E237. Catalysis depends on H254, which acts as the Proton donor. Position 257 (G257) interacts with NAD(+). Y258 is a binding site for substrate.

Belongs to the D-isomer specific 2-hydroxyacid dehydrogenase family. PdxB subfamily. Homodimer.

It localises to the cytoplasm. The enzyme catalyses 4-phospho-D-erythronate + NAD(+) = (R)-3-hydroxy-2-oxo-4-phosphooxybutanoate + NADH + H(+). Its pathway is cofactor biosynthesis; pyridoxine 5'-phosphate biosynthesis; pyridoxine 5'-phosphate from D-erythrose 4-phosphate: step 2/5. Catalyzes the oxidation of erythronate-4-phosphate to 3-hydroxy-2-oxo-4-phosphonooxybutanoate. The chain is Erythronate-4-phosphate dehydrogenase from Pseudomonas aeruginosa (strain ATCC 15692 / DSM 22644 / CIP 104116 / JCM 14847 / LMG 12228 / 1C / PRS 101 / PAO1).